Reading from the N-terminus, the 284-residue chain is L-ribulose-5-phosphate 3-epimerase UlaE (284 aa).

Belongs to the L-ribulose-5-phosphate 3-epimerase family.

The enzyme catalyses L-ribulose 5-phosphate = L-xylulose 5-phosphate. It participates in cofactor degradation; L-ascorbate degradation; D-xylulose 5-phosphate from L-ascorbate: step 3/4. Functionally, catalyzes the isomerization of L-xylulose-5-phosphate to L-ribulose-5-phosphate. Is involved in the anaerobic L-ascorbate utilization. The chain is L-ribulose-5-phosphate 3-epimerase UlaE from Salmonella paratyphi A (strain AKU_12601).